The chain runs to 246 residues: Acetoacetyl-CoA reductase (246 aa).

Residues 13 to 15 (GGI), Gly35, Arg40, 60 to 62 (GNV), and 88 to 92 (NAGIT) each bind NADP(+). Substrate-binding positions include Asp94 and 147–150 (QFGQ). Catalysis depends on Tyr153, which acts as the Proton acceptor. 183-186 (PGYI) lines the NADP(+) pocket. Substrate contacts are provided by residues 184 to 185 (GY) and Arg195.

The protein belongs to the short-chain dehydrogenases/reductases (SDR) family. In terms of assembly, homotetramer.

Its subcellular location is the cytoplasm. It catalyses the reaction a (3R)-3-hydroxyacyl-CoA + NADP(+) = a 3-oxoacyl-CoA + NADPH + H(+). The catalysed reaction is (3R)-3-hydroxybutanoyl-CoA + NADP(+) = acetoacetyl-CoA + NADPH + H(+). It functions in the pathway biopolymer metabolism; poly-(R)-3-hydroxybutanoate biosynthesis. Functionally, catalyzes the chiral reduction of acetoacetyl-CoA to (R)-3-hydroxybutyryl-CoA. Is involved in the biosynthesis of polyhydroxybutyrate (PHB), which is accumulated as an intracellular energy reserve material when cells grow under conditions of nutrient limitation. In Cupriavidus necator (strain ATCC 17699 / DSM 428 / KCTC 22496 / NCIMB 10442 / H16 / Stanier 337) (Ralstonia eutropha), this protein is Acetoacetyl-CoA reductase.